A 133-amino-acid polypeptide reads, in one-letter code: Ribosome-binding factor A (133 aa).

This sequence belongs to the RbfA family. As to quaternary structure, monomer. Binds 30S ribosomal subunits, but not 50S ribosomal subunits or 70S ribosomes.

It is found in the cytoplasm. Functionally, one of several proteins that assist in the late maturation steps of the functional core of the 30S ribosomal subunit. Associates with free 30S ribosomal subunits (but not with 30S subunits that are part of 70S ribosomes or polysomes). Required for efficient processing of 16S rRNA. May interact with the 5'-terminal helix region of 16S rRNA. In Salmonella schwarzengrund (strain CVM19633), this protein is Ribosome-binding factor A.